Consider the following 394-residue polypeptide: MILPARTPETSLLRVLFLGLSTLAAFSLAQMELHVPPGLNKLEAVEGEEVVLPAWYTMAREESSSHPWEAPFLIWFLEQEGKEPKQVLSYFKGSLSNKPGVTLVHSISTRNVSLRLDALQEGDSGTYRCSVNAYDSDGKNIGHSIKTIELKVLVPPAPPSCSFQGVPYVGTNVTLNCKSPRSKPTAQYQWERLAPSSQVFFGPALDTVRGSLKLTNISTAMSGVYVCKAQNRVGFAQCNVTLDVMTGSKAAVVAGAVVGTFVGLVLIAGLVLLYQRRSKTLEELANDIKEDAIAPRTLPWTKGSDTISKNGTLSSVTSARALRPPKAAPPRPGTFTPTPSVSSQALSSPRLPRTDGPPPQAVSLTPGGVSSSTLNRMGAVPVMVPAQSQAGSLV.

Residues 1-29 (MILPARTPETSLLRVLFLGLSTLAAFSLA) form the signal peptide. Residues 30 to 251 (QMELHVPPGL…LDVMTGSKAA (222 aa)) are Extracellular-facing. The 110-residue stretch at 37–146 (PGLNKLEAVE…DGKNIGHSIK (110 aa)) folds into the Ig-like V-type domain. 4 N-linked (GlcNAc...) asparagine glycosylation sites follow: Asn-111, Asn-172, Asn-216, and Asn-239. The region spanning 156-243 (PAPPSCSFQG…GFAQCNVTLD (88 aa)) is the Ig-like C2-type domain. The cysteines at positions 177 and 227 are disulfide-linked. The helical transmembrane segment at 252-272 (VVAGAVVGTFVGLVLIAGLVL) threads the bilayer. At 273–394 (LYQRRSKTLE…PAQSQAGSLV (122 aa)) the chain is on the cytoplasmic side. Residues 300-372 (WTKGSDTISK…SLTPGGVSSS (73 aa)) are disordered. Polar residues-rich tracts occupy residues 303-318 (GSDTISKNGTLSSVTS) and 335-347 (FTPTPSVSSQALS). Ser-304 is modified (phosphoserine). Thr-336 and Thr-338 each carry phosphothreonine. A phosphoserine mark is found at Ser-340, Ser-343, and Ser-348.

Interacts with MAGI1.

It localises to the cell junction. It is found in the adherens junction. The protein localises to the tight junction. The protein resides in the cell membrane. Its function is as follows. Can mediate aggregation most likely through a homophilic molecular interaction. This is Endothelial cell-selective adhesion molecule (Esam) from Rattus norvegicus (Rat).